A 176-amino-acid polypeptide reads, in one-letter code: Ribosome maturation factor RimM (176 aa).

The PRC barrel domain occupies 97-176 (EDDFYWRDLI…QICVDWDPGF (80 aa)).

It belongs to the RimM family. In terms of assembly, binds ribosomal protein uS19.

The protein resides in the cytoplasm. Functionally, an accessory protein needed during the final step in the assembly of 30S ribosomal subunit, possibly for assembly of the head region. Essential for efficient processing of 16S rRNA. May be needed both before and after RbfA during the maturation of 16S rRNA. It has affinity for free ribosomal 30S subunits but not for 70S ribosomes. The chain is Ribosome maturation factor RimM from Colwellia psychrerythraea (strain 34H / ATCC BAA-681) (Vibrio psychroerythus).